A 240-amino-acid polypeptide reads, in one-letter code: uncharacterized protein (240 aa).

Positions 1–11 (MGMTPRRKRRG) are enriched in basic residues. The segment at 1-32 (MGMTPRRKRRGGAVQITRPTGRPRTPTTQTTK) is disordered. The segment covering 17-31 (TRPTGRPRTPTTQTT) has biased composition (low complexity). The next 6 membrane-spanning stretches (helical) occupy residues 36 to 56 (WVVG…VELI), 93 to 113 (LMAN…AGLS), 115 to 135 (FVWA…LIGN), 146 to 166 (IGAS…GLFV), 172 to 192 (IVIG…AMPV), and 198 to 218 (GVSW…AYLL).

The protein to M.leprae ML1171.

It localises to the cell membrane. This is an uncharacterized protein from Mycobacterium tuberculosis (strain CDC 1551 / Oshkosh).